The chain runs to 469 residues: Glutamate--tRNA ligase (469 aa).

Residues 9–19 carry the 'HIGH' region motif; sequence PSPTGFLHVGG. Positions 236-240 match the 'KMSKS' region motif; sequence KLSKR. Lysine 239 contacts ATP.

It belongs to the class-I aminoacyl-tRNA synthetase family. Glutamate--tRNA ligase type 1 subfamily. In terms of assembly, monomer.

The protein localises to the cytoplasm. The catalysed reaction is tRNA(Glu) + L-glutamate + ATP = L-glutamyl-tRNA(Glu) + AMP + diphosphate. In terms of biological role, catalyzes the attachment of glutamate to tRNA(Glu) in a two-step reaction: glutamate is first activated by ATP to form Glu-AMP and then transferred to the acceptor end of tRNA(Glu). This is Glutamate--tRNA ligase from Pseudoalteromonas atlantica (strain T6c / ATCC BAA-1087).